A 341-amino-acid polypeptide reads, in one-letter code: HTH-type transcriptional repressor PurR (341 aa).

An HTH lacI-type domain is found at 2–56 (ATIKDVAKRAGVSTTTVSHVINKTRFVADETKAAVWEAIKELHYSPSAVARSLKV). Residues 4–23 (IKDVAKRAGVSTTTVSHVIN) constitute a DNA-binding region (H-T-H motif). Residues 48–56 (SAVARSLKV) mediate DNA binding. Residues Tyr73, Arg190, Thr192, Phe221, and Asp275 each contribute to the hypoxanthine site.

In terms of assembly, homodimer.

It functions in the pathway purine metabolism; purine nucleotide biosynthesis [regulation]. Is the main repressor of the genes involved in the de novo synthesis of purine nucleotides, regulating purB, purC, purEK, purF, purHD, purL, purMN and guaBA expression. PurR is allosterically activated to bind its cognate DNA by binding the purine corepressors, hypoxanthine or guanine, thereby effecting transcription repression. This chain is HTH-type transcriptional repressor PurR, found in Edwardsiella ictaluri (strain 93-146).